Reading from the N-terminus, the 232-residue chain is Phosphatidylserine decarboxylase proenzyme (232 aa).

The active-site Schiff-base intermediate with substrate; via pyruvic acid is serine 190. The residue at position 190 (serine 190) is a Pyruvic acid (Ser); by autocatalysis.

This sequence belongs to the phosphatidylserine decarboxylase family. PSD-A subfamily. In terms of assembly, heterodimer of a large membrane-associated beta subunit and a small pyruvoyl-containing alpha subunit. Pyruvate serves as cofactor. In terms of processing, is synthesized initially as an inactive proenzyme. Formation of the active enzyme involves a self-maturation process in which the active site pyruvoyl group is generated from an internal serine residue via an autocatalytic post-translational modification. Two non-identical subunits are generated from the proenzyme in this reaction, and the pyruvate is formed at the N-terminus of the alpha chain, which is derived from the carboxyl end of the proenzyme. The post-translation cleavage follows an unusual pathway, termed non-hydrolytic serinolysis, in which the side chain hydroxyl group of the serine supplies its oxygen atom to form the C-terminus of the beta chain, while the remainder of the serine residue undergoes an oxidative deamination to produce ammonia and the pyruvoyl prosthetic group on the alpha chain.

The protein localises to the cell membrane. It catalyses the reaction a 1,2-diacyl-sn-glycero-3-phospho-L-serine + H(+) = a 1,2-diacyl-sn-glycero-3-phosphoethanolamine + CO2. The protein operates within phospholipid metabolism; phosphatidylethanolamine biosynthesis; phosphatidylethanolamine from CDP-diacylglycerol: step 2/2. Its function is as follows. Catalyzes the formation of phosphatidylethanolamine (PtdEtn) from phosphatidylserine (PtdSer). The protein is Phosphatidylserine decarboxylase proenzyme of Sinorhizobium medicae (strain WSM419) (Ensifer medicae).